The following is a 506-amino-acid chain: Chromodomain Y-like protein 2 (506 aa).

The 61-residue stretch at 7–67 (YEVERIVDKR…LHMSKDKRIK (61 aa)) folds into the Chromo domain. Positions 64-177 (KRIKSGKQSS…RHFGNGSHQP (114 aa)) are disordered. A compositionally biased stretch (basic and acidic residues) spans 88-98 (KLSHRPSDPGK). Residues 101-120 (GTSHKRKRINPPLAKPKKGY) show a composition bias toward basic residues. Polar residues predominate over residues 133–143 (KTVSYRTTPSG).

Interacts (via chromo domain) with histone H3K9me3. As to expression, ubiquitously expressed.

The protein resides in the nucleus. In Homo sapiens (Human), this protein is Chromodomain Y-like protein 2 (CDYL2).